Here is a 126-residue protein sequence, read N- to C-terminus: Fluoride-specific ion channel FluC 2 (126 aa).

A run of 4 helical transmembrane segments spans residues 11–31 (IFLIGAGGFLGAVCRFLLCEL), 34–54 (GQLGILSVNVIGSFMLGMIMY), 66–86 (GKIAFGTGFMGAFTTFSTFAV), and 93–113 (FIPALGNISANIFLTLTGVFF). 2 residues coordinate Na(+): G76 and T79.

Belongs to the fluoride channel Fluc/FEX (TC 1.A.43) family.

It is found in the cell membrane. It catalyses the reaction fluoride(in) = fluoride(out). Its activity is regulated as follows. Na(+) is not transported, but it plays an essential structural role and its presence is essential for fluoride channel function. Fluoride-specific ion channel. Important for reducing fluoride concentration in the cell, thus reducing its toxicity. In Methanosarcina acetivorans (strain ATCC 35395 / DSM 2834 / JCM 12185 / C2A), this protein is Fluoride-specific ion channel FluC 2.